The primary structure comprises 130 residues: Small ribosomal subunit protein uS9 (130 aa).

The protein belongs to the universal ribosomal protein uS9 family.

The polypeptide is Small ribosomal subunit protein uS9 (Nitratidesulfovibrio vulgaris (strain ATCC 29579 / DSM 644 / CCUG 34227 / NCIMB 8303 / VKM B-1760 / Hildenborough) (Desulfovibrio vulgaris)).